The primary structure comprises 235 residues: Elongation factor Tu, chloroplastic (235 aa).

A tr-type G domain is found at 1–125 (KNMITGAAQM…AVDEYIPTPV (125 aa)). Residue 47–50 (NKQD) coordinates GTP.

This sequence belongs to the TRAFAC class translation factor GTPase superfamily. Classic translation factor GTPase family. EF-Tu/EF-1A subfamily.

The protein resides in the plastid. The protein localises to the chloroplast. The enzyme catalyses GTP + H2O = GDP + phosphate + H(+). GTP hydrolase that promotes the GTP-dependent binding of aminoacyl-tRNA to the A-site of ribosomes during protein biosynthesis. The polypeptide is Elongation factor Tu, chloroplastic (tufA) (Gracilariopsis lemaneiformis (Red alga)).